Consider the following 117-residue polypeptide: Protein Rev (117 aa).

Phosphoserine; by host CK2 is present on residues serine 5 and serine 8. The interval 18–26 is homomultimerization; that stretch reads LIKILYQSN. The interval 24-49 is disordered; that stretch reads QSNPPPNTEGTTRQARRNRRRRWRAR. The short motif at 35–51 is the Nuclear localization signal and RNA-binding (RRE) element; that stretch reads TRQARRNRRRRWRARQR. Over residues 37 to 49 the composition is skewed to basic residues; it reads QARRNRRRRWRAR. Residues 74–85 carry the Nuclear export signal and binding to XPO1 motif; sequence LQLPPLERLTLN. A phosphoserine; by host mark is found at serine 93 and serine 100. The span at 93–105 shows a compositional bias: polar residues; it reads SGTQGVGSPQISV. The disordered stretch occupies residues 93-117; it reads SGTQGVGSPQISVESPAILGSGTEE.

The protein belongs to the HIV-1 REV protein family. As to quaternary structure, homomultimer; when bound to the RRE. Multimeric assembly is essential for activity and may involve XPO1. Binds to human KPNB1, XPO1, TNPO1, RANBP5 and IPO7. Interacts with the viral Integrase. Interacts with human KHDRBS1. Interacts with human NAP1; this interaction decreases Rev multimerization and stimulates its activity. Interacts with human DEAD-box helicases DDX3 and DDX24; these interactions may serve for viral RNA export to the cytoplasm and packaging, respectively. Interacts with human PSIP1; this interaction may inhibit HIV-1 DNA integration by promoting dissociation of the Integrase-LEDGF/p75 complex. In terms of processing, asymmetrically arginine dimethylated at one site by host PRMT6. Methylation impairs the RNA-binding activity and export of viral RNA from the nucleus to the cytoplasm. Phosphorylated by protein kinase CK2. Presence of, and maybe binding to the N-terminus of the regulatory beta subunit of CK2 is necessary for CK2-mediated Rev's phosphorylation.

It localises to the host nucleus. It is found in the host nucleolus. The protein resides in the host cytoplasm. In terms of biological role, escorts unspliced or incompletely spliced viral pre-mRNAs (late transcripts) out of the nucleus of infected cells. These pre-mRNAs carry a recognition sequence called Rev responsive element (RRE) located in the env gene, that is not present in fully spliced viral mRNAs (early transcripts). This function is essential since most viral proteins are translated from unspliced or partially spliced pre-mRNAs which cannot exit the nucleus by the pathway used by fully processed cellular mRNAs. Rev itself is translated from a fully spliced mRNA that readily exits the nucleus. Rev's nuclear localization signal (NLS) binds directly to KPNB1/Importin beta-1 without previous binding to KPNA1/Importin alpha-1. KPNB1 binds to the GDP bound form of RAN (Ran-GDP) and targets Rev to the nucleus. In the nucleus, the conversion from Ran-GDP to Ran-GTP dissociates Rev from KPNB1 and allows Rev's binding to the RRE in viral pre-mRNAs. Rev multimerization on the RRE via cooperative assembly exposes its nuclear export signal (NES) to the surface. Rev can then form a complex with XPO1/CRM1 and Ran-GTP, leading to nuclear export of the complex. Conversion from Ran-GTP to Ran-GDP mediates dissociation of the Rev/RRE/XPO1/RAN complex, so that Rev can return to the nucleus for a subsequent round of export. Beside KPNB1, also seems to interact with TNPO1/Transportin-1, RANBP5/IPO5 and IPO7/RANBP7 for nuclear import. The nucleoporin-like HRB/RIP is an essential cofactor that probably indirectly interacts with Rev to release HIV RNAs from the perinuclear region to the cytoplasm. The polypeptide is Protein Rev (Human immunodeficiency virus type 1 group M subtype A (isolate MAL) (HIV-1)).